The primary structure comprises 119 residues: NADH-quinone oxidoreductase subunit A (119 aa).

Transmembrane regions (helical) follow at residues 9–29, 63–83, and 88–108; these read IFLF…LGYI, LVAI…PWAV, and IGAL…VGFI.

The protein belongs to the complex I subunit 3 family. In terms of assembly, NDH-1 is composed of 14 different subunits. Subunits NuoA, H, J, K, L, M, N constitute the membrane sector of the complex.

It localises to the cell inner membrane. It catalyses the reaction a quinone + NADH + 5 H(+)(in) = a quinol + NAD(+) + 4 H(+)(out). In terms of biological role, NDH-1 shuttles electrons from NADH, via FMN and iron-sulfur (Fe-S) centers, to quinones in the respiratory chain. The immediate electron acceptor for the enzyme in this species is believed to be ubiquinone. Couples the redox reaction to proton translocation (for every two electrons transferred, four hydrogen ions are translocated across the cytoplasmic membrane), and thus conserves the redox energy in a proton gradient. The protein is NADH-quinone oxidoreductase subunit A of Albidiferax ferrireducens (strain ATCC BAA-621 / DSM 15236 / T118) (Rhodoferax ferrireducens).